Reading from the N-terminus, the 179-residue chain is Transcriptional regulator ICP22 homolog (179 aa).

Basic and acidic residues predominate over residues 1–12; sequence MSRDRDRARPDT. Residues 1–40 are disordered; that stretch reads MSRDRDRARPDTRLSSSDNESDDEDYQLPHSHPEYGSDSS.

Belongs to the herpesviridae ICP22 family.

In Gallid herpesvirus 2 (strain Chicken/Md5/ATCC VR-987) (GaHV-2), this protein is Transcriptional regulator ICP22 homolog (MDV088).